Reading from the N-terminus, the 270-residue chain is Bacterial microcompartment shell protein PduB (270 aa).

BMC circularly permuted domains follow at residues 47–152 and 154–262; these read EFVG…DRTF and DVYA…GSEP.

Belongs to the EutL/PduB family. Homotrimerizes to form a pseudohexamer with a central pore. The trimers pack into an array. Both forms interact with shell protein PduA. Post-translationally, in purified BMCs seen as a 30.0 kDa and 25.0 kDa form; the smaller form is called PduB'.

It localises to the bacterial microcompartment. It functions in the pathway polyol metabolism; 1,2-propanediol degradation. The two proteins produced are among the major shell proteins of the bacterial microcompartment (BMC) shell dedicated to 1,2-propanediol (1,2-PD) degradation. Overexpression of the gene gives large amorphous intracellular structures; when only PduB is overexpressed large circular bodies are observed which contain concentric rings, whereas with PduB' overexpression internal bodies with regular straight-lined structures were generated. The N-terminus of the long form (PduB) is required for correct formation of BMCs. May play a major role in binding the enzyme contents to the shell. Functionally, expression of a cosmid containing the full 21-gene pdu operon in E.coli allows E.coli to grow on 1,2-propanediol (1,2-PD) with the appearance of BMCs in its cytoplasm. Its function is as follows. The 1,2-PD-specific bacterial microcompartment (BMC) concentrates low levels of 1,2-PD catabolic enzymes, concentrates volatile reaction intermediates thus enhancing pathway flux and keeps the level of toxic, mutagenic propionaldehyde low. This chain is Bacterial microcompartment shell protein PduB, found in Citrobacter freundii.